A 236-amino-acid polypeptide reads, in one-letter code: MKLNIAYPVNGTQKTVEVDDEHRVRVFYDKRIGQEIEGEAVGDEFKGYTFKITGGNDKQGFPMKQGVLLPTRVKLLLAKGHSCYRPRRSGERKRKSVRGAIVGPDLAVLSLVIVKKGEQELEGVTDATVPKRLGPKRANHIRKFFGLTKEDDVRDFVIRREVTKGEKTYTKAPKIQRLVTPQRLQRKRYQRNLKVRNAQAQREAAAEYAQLLAKRLAERKAEKAETRKRRASSLKA.

Residues serine 232 and serine 233 each carry the phosphoserine modification.

It belongs to the eukaryotic ribosomal protein eS6 family. Phosphorylated.

This is Small ribosomal subunit protein eS6 (RPS6A) from Candida glabrata (strain ATCC 2001 / BCRC 20586 / JCM 3761 / NBRC 0622 / NRRL Y-65 / CBS 138) (Yeast).